The primary structure comprises 549 residues: Leucine-rich repeat, immunoglobulin-like domain and transmembrane domain-containing protein 2 (549 aa).

Residues M1–P22 form the signal peptide. One can recognise an LRRNT domain in the interval F23 to P54. LRR repeat units follow at residues S80–P103, E104–A125, L128–F149, and N152–N173. N90 is a glycosylation site (N-linked (GlcNAc...) asparagine). Residues N200–K252 form the LRRCT domain. One can recognise an Ig-like domain in the interval P253 to V339. A glycan (N-linked (GlcNAc...) asparagine) is linked at N261. A disulfide bridge connects residues C274 and C327. The Fibronectin type-III domain occupies E361–V447. A helical membrane pass occupies residues L463–V483. N491 is a glycosylation site (N-linked (GlcNAc...) asparagine). The interval F521–S549 is disordered. A compositionally biased stretch (acidic residues) spans E538–S549.

Interacts with LRIT1; may form a heterodimer with LRIT1.

Its subcellular location is the membrane. This chain is Leucine-rich repeat, immunoglobulin-like domain and transmembrane domain-containing protein 2 (Lrit2), found in Mus musculus (Mouse).